A 331-amino-acid chain; its full sequence is Glutaminase (331 aa).

7 residues coordinate substrate: Ser77, Asn129, Glu173, Asn180, Tyr204, Tyr256, and Val274.

Belongs to the glutaminase family. In terms of assembly, homotetramer.

The catalysed reaction is L-glutamine + H2O = L-glutamate + NH4(+). This Oceanobacillus iheyensis (strain DSM 14371 / CIP 107618 / JCM 11309 / KCTC 3954 / HTE831) protein is Glutaminase.